We begin with the raw amino-acid sequence, 354 residues long: Protein OVEREXPRESSOR OF CATIONIC PEROXIDASE 3 (354 aa).

Residues 63-70 carry the Nuclear localization signal 1 motif; it reads NRKGFVSS. Disordered stretches follow at residues 65–98 and 151–186; these read KGFV…EDPF and TGDV…PTKL. Acidic residues predominate over residues 154–181; that stretch reads VDVDVDNDDDDNDDDDNDDDDDDSEEDE. The short motif at 191–198 is the Nuclear localization signal 2 element; sequence LKRLAYAL. The interval 243 to 264 is disordered; the sequence is KPPVAAPENSSPDPSPVESLSA. The homeobox DNA-binding region spans 286–345; that stretch reads RWSAQKRVKKAHIETLEKVYRRSKRPTNAVVSSIVQVTNLPRKRVLKWFEDKRAEDGVPD. The short motif at 293–300 is the Nuclear localization signal 3 element; that stretch reads VKKAHIET.

It is found in the nucleus. In terms of biological role, may modulate chromatin structure by regulation of nucleosome assembly/disassembly. Homeodomain transcription factor that mediates jasmonic acid (JA)-mediated COI1-dependent and abscisic acid (ABA)-mediated PMR4-dependent resistance to infection by necrotrophic fungal pathogens (e.g. B.cinerea and P.cucumerina) and bacterial pathogens (e.g. P.syringae DC3000); this resistance involves at least callose deposition. Required for the P.fluorescens WCS417r-triggered JA-dependent induced systemic resistance (ISR) against both P.syringae DC3000 and H.arabidopsidis. Negative regulator of the ABA-dependent drought resistance. This Arabidopsis thaliana (Mouse-ear cress) protein is Protein OVEREXPRESSOR OF CATIONIC PEROXIDASE 3.